Reading from the N-terminus, the 256-residue chain is ATP synthase peripheral stalk subunit b, mitochondrial (256 aa).

A mitochondrion-targeting transit peptide spans M1 to V42. K131 is modified (N6-succinyllysine). Residues K139, K154, K162, K221, K233, and K244 each carry the N6-acetyllysine modification.

Belongs to the eukaryotic ATPase B chain family. As to quaternary structure, component of the ATP synthase complex composed at least of ATP5F1A/subunit alpha, ATP5F1B/subunit beta, ATP5MC1/subunit c (homooctomer), MT-ATP6/subunit a, MT-ATP8/subunit 8, ATP5ME/subunit e, ATP5MF/subunit f, ATP5MG/subunit g, ATP5MK/subunit k, ATP5MJ/subunit j, ATP5F1C/subunit gamma, ATP5F1D/subunit delta, ATP5F1E/subunit epsilon, ATP5PF/subunit F6, ATP5PB/subunit b, ATP5PD/subunit d, ATP5PO/subunit OSCP. ATP synthase complex consists of a soluble F(1) head domain (subunits alpha(3) and beta(3)) - the catalytic core - and a membrane F(0) domain - the membrane proton channel (subunits c, a, 8, e, f, g, k and j). These two domains are linked by a central stalk (subunits gamma, delta, and epsilon) rotating inside the F1 region and a stationary peripheral stalk (subunits F6, b, d, and OSCP).

The protein resides in the mitochondrion. It localises to the mitochondrion inner membrane. Functionally, subunit b, of the mitochondrial membrane ATP synthase complex (F(1)F(0) ATP synthase or Complex V) that produces ATP from ADP in the presence of a proton gradient across the membrane which is generated by electron transport complexes of the respiratory chain. ATP synthase complex consist of a soluble F(1) head domain - the catalytic core - and a membrane F(1) domain - the membrane proton channel. These two domains are linked by a central stalk rotating inside the F(1) region and a stationary peripheral stalk. During catalysis, ATP synthesis in the catalytic domain of F(1) is coupled via a rotary mechanism of the central stalk subunits to proton translocation. In vivo, can only synthesize ATP although its ATP hydrolase activity can be activated artificially in vitro. Part of the complex F(0) domain. Part of the complex F(0) domain and the peripheric stalk, which acts as a stator to hold the catalytic alpha(3)beta(3) subcomplex and subunit a/ATP6 static relative to the rotary elements. This is ATP synthase peripheral stalk subunit b, mitochondrial from Homo sapiens (Human).